The following is a 188-amino-acid chain: MAIMSDKWIKEAVINHSMIRPFAEKQVRVHNKEKIISYGLSSYGYDARVSNEFKIFTNINSTTVDPKNFSEYNLVDREVDVCIIPPNSFALGRTIEYFKIPRDVLVICVGKSTYARCGIIVNVTPLEPEWEGHVTLEFSNTTPLPAKIYANEGACQFLFLKSDQICDTSYADRQGKYMKQVGVTLPLT.

Residues 111–116 (KSTYAR), 135–137 (TLE), glutamine 156, tyrosine 170, lysine 179, and glutamine 180 contribute to the dCTP site. The active-site Proton donor/acceptor is the glutamate 137.

This sequence belongs to the dCTP deaminase family. Homotrimer.

It catalyses the reaction dCTP + H2O + H(+) = dUTP + NH4(+). It participates in pyrimidine metabolism; dUMP biosynthesis; dUMP from dCTP (dUTP route): step 1/2. Catalyzes the deamination of dCTP to dUTP. This Rickettsia africae (strain ESF-5) protein is dCTP deaminase.